Here is a 263-residue protein sequence, read N- to C-terminus: L-erythrulose-1-phosphate isomerase (263 aa).

His106 acts as the Electrophile in catalysis. Glu178 functions as the Proton acceptor in the catalytic mechanism.

Belongs to the triosephosphate isomerase family.

The catalysed reaction is L-erythrulose 1-phosphate = D-erythrulose 4-phosphate. The protein operates within carbohydrate metabolism; L-threitol degradation. Catalyzes the isomerization of L-erythrulose-1P to D-erythrulose-4P. Involved in the degradation pathway of L-threitol, that allows M.smegmatis to grow on this compound as the sole carbon source. In Mycolicibacterium smegmatis (strain ATCC 700084 / mc(2)155) (Mycobacterium smegmatis), this protein is L-erythrulose-1-phosphate isomerase.